Consider the following 619-residue polypeptide: Guanylate cyclase soluble subunit beta-1 (619 aa).

His-105 is a binding site for heme. Positions 421 to 554 (TILFSGIVGF…NTVNLTSRTE (134 aa)) constitute a Guanylate cyclase domain.

It belongs to the adenylyl cyclase class-4/guanylyl cyclase family. As to quaternary structure, the active enzyme is formed by a heterodimer of an alpha and a beta subunit. Homotetramer; dimer of dimers (in vitro). Heterodimer with GUCY1A1. Can also form inactive homodimers in vitro. It depends on heme as a cofactor. Lung and brain.

The protein resides in the cytoplasm. The catalysed reaction is GTP = 3',5'-cyclic GMP + diphosphate. Activated by nitric oxide in the presence of magnesium or manganese ions. Its function is as follows. Mediates responses to nitric oxide (NO) by catalyzing the biosynthesis of the signaling molecule cGMP. In Rattus norvegicus (Rat), this protein is Guanylate cyclase soluble subunit beta-1 (Gucy1b1).